A 328-amino-acid chain; its full sequence is Biotin synthase (328 aa).

Positions 50–277 constitute a Radical SAM core domain; it reads FGDQVHLCCI…GKEIVICGGR (228 aa). Positions 67, 71, and 74 each coordinate [4Fe-4S] cluster. The [2Fe-2S] cluster site is built by Ser-111, Cys-142, and Cys-202.

This sequence belongs to the radical SAM superfamily. Biotin synthase family. In terms of assembly, homodimer. [4Fe-4S] cluster serves as cofactor. The cofactor is [2Fe-2S] cluster.

It catalyses the reaction (4R,5S)-dethiobiotin + (sulfur carrier)-SH + 2 reduced [2Fe-2S]-[ferredoxin] + 2 S-adenosyl-L-methionine = (sulfur carrier)-H + biotin + 2 5'-deoxyadenosine + 2 L-methionine + 2 oxidized [2Fe-2S]-[ferredoxin]. The protein operates within cofactor biosynthesis; biotin biosynthesis; biotin from 7,8-diaminononanoate: step 2/2. Its function is as follows. Catalyzes the conversion of dethiobiotin (DTB) to biotin by the insertion of a sulfur atom into dethiobiotin via a radical-based mechanism. This chain is Biotin synthase, found in Desulfatibacillum aliphaticivorans.